The chain runs to 166 residues: Small ribosomal subunit protein uS5 (166 aa).

The S5 DRBM domain maps to 11-74; the sequence is LQEKLIAVNR…EKARRNMINV (64 aa).

Belongs to the universal ribosomal protein uS5 family. As to quaternary structure, part of the 30S ribosomal subunit. Contacts proteins S4 and S8.

Functionally, with S4 and S12 plays an important role in translational accuracy. Located at the back of the 30S subunit body where it stabilizes the conformation of the head with respect to the body. This is Small ribosomal subunit protein uS5 from Actinobacillus pleuropneumoniae serotype 5b (strain L20).